An 81-amino-acid chain; its full sequence is U-poneritoxin(01)-Om2a (81 aa).

The N-terminal stretch at 1 to 25 (MKPSGITFAFLVVFMMAIMYNSVQA) is a signal peptide. A propeptide spanning residues 26 to 47 (AAIADADADAEAKAFADAFAEA) is cleaved from the precursor.

Belongs to the formicidae venom precursor-01 superfamily. Post-translationally, truncated sequences of this peptide have also been found in the venom. It is possible they have been cleaved in the venom. Expressed by the venom gland.

The protein resides in the secreted. In terms of biological role, cationic amphipathic alpha-helical peptide with antimicrobial activities against E.coli (MIC=6.2 uM), S.aureus (MIC=6.2 uM), and S.cerevisiae (MIC=50 uM). Also shows histamine-releasing activity (30.1% at 10 uM) and a weak hemolytic activity (10.4% at 50 uM). This is U-poneritoxin(01)-Om2a from Odontomachus monticola (Trap-jaw ant).